The sequence spans 296 residues: NADH-cytochrome b5 reductase 2 (296 aa).

The helical transmembrane segment at 2 to 24 (LVALAAIGVTVLLFLIKALGSGA) threads the bilayer. In terms of domain architecture, FAD-binding FR-type spans 35 to 147 (NAKYPLPLIE…RGPNGLLVYK (113 aa)). FAD-binding positions include 127-142 (DSLK…GPNG) and 166-201 (VAKH…KCYL).

The protein belongs to the flavoprotein pyridine nucleotide cytochrome reductase family. Requires FAD as cofactor.

Its subcellular location is the membrane. The enzyme catalyses 2 Fe(III)-[cytochrome b5] + NADH = 2 Fe(II)-[cytochrome b5] + NAD(+) + H(+). In terms of biological role, NADH-cytochrome b5 reductases are involved in desaturation and elongation of fatty acids, cholesterol biosynthesis and drug metabolism. This chain is NADH-cytochrome b5 reductase 2 (cyb5r2), found in Xenopus laevis (African clawed frog).